A 406-amino-acid polypeptide reads, in one-letter code: Vacuole membrane protein 1 (406 aa).

The span at 1–20 shows a compositional bias: basic and acidic residues; it reads MAENGKNCDQRRIAMSKDQH. Residues 1-37 form a disordered region; it reads MAENGKNCDQRRIAMSKDQHNGSLTDPSSVHEKKRRD. At Ala-2 the chain carries N-acetylalanine. The Cytoplasmic segment spans residues 2 to 77; that stretch reads AENGKNCDQR…WTSKLWHRQS (76 aa). A helical transmembrane segment spans residues 78–98; that stretch reads IVVSFLLLLAALVATYYVEGA. The Extracellular segment spans residues 99-109; that stretch reads HQQYVQRIEKQ. Residues 110–130 traverse the membrane as a helical segment; sequence FLLYAYWIGLGILSSVGLGTG. The Cytoplasmic portion of the chain corresponds to 131 to 250; that stretch reads LHTFLLYLGP…ASRAKLAVQK (120 aa). A VTT domain region spans residues 173 to 316; the sequence is GAEGAISLWS…FVIVTFSKHI (144 aa). A helical membrane pass occupies residues 251 to 271; the sequence is LVQKVGFFGILACASIPNPLF. The Extracellular segment spans residues 272 to 273; it reads DL. The helical transmembrane segment at 274–294 threads the bilayer; that stretch reads AGITCGHFLVPFWTFFGATLI. The Cytoplasmic portion of the chain corresponds to 295–305; it reads GKAIIKMHIQK. Residues 306-326 traverse the membrane as a helical segment; sequence IFVIVTFSKHIVEQMVTFIGA. Topologically, residues 327–363 are extracellular; sequence VPGIGPSLQKPFQEYLEAQRQKLHHRSEAGTPQGENW. The helical transmembrane segment at 364–384 threads the bilayer; that stretch reads LSWMFEKLVVAMVCYFVLSII. The Cytoplasmic portion of the chain corresponds to 385–406; that stretch reads NSMAQNYAKRIQQRLNSEEKTK.

The protein belongs to the VMP1 family. Interacts with BECN1. Interacts with TJP1. Interacts with TP53INP2. Interacts with TMEM41B. Interacts with ATP2A2, PLN and SLN; competes with PLN and SLN to prevent them from forming an inhibitory complex with ATP2A2. Interacts with ATG2A.

It is found in the endoplasmic reticulum-Golgi intermediate compartment membrane. The protein resides in the cell membrane. Its subcellular location is the vacuole membrane. It localises to the endoplasmic reticulum membrane. It carries out the reaction a 1,2-diacyl-sn-glycero-3-phospho-L-serine(in) = a 1,2-diacyl-sn-glycero-3-phospho-L-serine(out). The catalysed reaction is cholesterol(in) = cholesterol(out). It catalyses the reaction a 1,2-diacyl-sn-glycero-3-phosphocholine(in) = a 1,2-diacyl-sn-glycero-3-phosphocholine(out). The enzyme catalyses a 1,2-diacyl-sn-glycero-3-phosphoethanolamine(in) = a 1,2-diacyl-sn-glycero-3-phosphoethanolamine(out). Its function is as follows. Phospholipid scramblase involved in lipid homeostasis and membrane dynamics processes. Has phospholipid scramblase activity toward cholesterol and phosphatidylserine, as well as phosphatidylethanolamine and phosphatidylcholine. Required for autophagosome formation: participates in early stages of autophagosome biogenesis at the endoplasmic reticulum (ER) membrane by reequilibrating the leaflets of the ER as lipids are extracted by ATG2 (ATG2A or ATG2B) to mediate autophagosome assembly. Regulates ATP2A2 activity to control ER-isolation membrane contacts for autophagosome formation. In addition to autophagy, involved in other processes in which phospholipid scramblase activity is required. Modulates ER contacts with lipid droplets, mitochondria and endosomes. Plays an essential role in formation of cell junctions. Upon stress such as bacterial and viral infection, promotes formation of cytoplasmic vacuoles followed by cell death. Involved in the cytoplasmic vacuolization of acinar cells during the early stage of acute pancreatitis. The polypeptide is Vacuole membrane protein 1 (Mus musculus (Mouse)).